The following is a 342-amino-acid chain: Ribosomal RNA small subunit methyltransferase C (342 aa).

It belongs to the methyltransferase superfamily. RsmC family. As to quaternary structure, monomer.

The protein localises to the cytoplasm. It catalyses the reaction guanosine(1207) in 16S rRNA + S-adenosyl-L-methionine = N(2)-methylguanosine(1207) in 16S rRNA + S-adenosyl-L-homocysteine + H(+). Specifically methylates the guanine in position 1207 of 16S rRNA in the 30S particle. The protein is Ribosomal RNA small subunit methyltransferase C of Klebsiella pneumoniae subsp. pneumoniae (strain ATCC 700721 / MGH 78578).